A 328-amino-acid polypeptide reads, in one-letter code: tRNA uridine(34) hydroxylase (328 aa).

Positions 130–224 (LDKDTVVLDT…YGKDPEVQGE (95 aa)) constitute a Rhodanese domain. The Cysteine persulfide intermediate role is filled by C184.

This sequence belongs to the TrhO family.

The catalysed reaction is uridine(34) in tRNA + AH2 + O2 = 5-hydroxyuridine(34) in tRNA + A + H2O. In terms of biological role, catalyzes oxygen-dependent 5-hydroxyuridine (ho5U) modification at position 34 in tRNAs. The protein is tRNA uridine(34) hydroxylase of Streptococcus pneumoniae (strain ATCC 700669 / Spain 23F-1).